Consider the following 2486-residue polypeptide: Nonribosomal peptide synthetase nanA (2486 aa).

An adenylation 1 region spans residues 231–637 (FSARQPLSPA…GRRGTQVKLR (407 aa)). Residues 786–860 (TDIELKVHAL…DLARSAKETS (75 aa)) enclose the Carrier 1 domain. Residue Ser-820 is modified to O-(pantetheine 4'-phosphoryl)serine. A condensation 1 region spans residues 902–1314 (EDAYPCTPLQ…LKSVPRVSSQ (413 aa)). The tract at residues 1339 to 1735 (RAQARKTPLA…GRIGDQMKIR (397 aa)) is adenylation 2. 2 Carrier domains span residues 1872 to 1948 (PPST…SSAS) and 2404 to 2480 (SSSE…QTQA). Residues Ser-1909 and Ser-2441 each carry the O-(pantetheine 4'-phosphoryl)serine modification. The interval 2404 to 2480 (SSSETIVEPL…KLARLLQTQA (77 aa)) is condensation 2.

This sequence belongs to the NRP synthetase family.

Its pathway is secondary metabolite biosynthesis. Nonribosomal peptide synthetase; part of the gene cluster that mediates the biosynthesis of the benzazepine alkaloid nanangelenin A which contains an unprecedented 3,4-dihydro-1-benzazepine-2,5-dione-N-prenyl-N-acetoxy-anthranilamide scaffold. The first step of nanangelenin biosynthesis is catalyzed by the indoleamine 2,3-dioxygenase nanC which produces N-formyl-kynurenine through the catabolism of tryptophan. The two-module NRPS nanA then utilizes anthranilate (Ant) and L-kynurenine (L-Kyn) to assemble the dipeptide product nanangelenin B. The first adenylation domain of nanA (A1) loads anthranilate onto the T1 domain, while A2 loads kynurenine, generated through spontaneous nonenzymatic deformylation of the nanC-supplied N-formyl-kynurenine. The peptide bond formation between the tethered amino acids is catalyzed by the first condensation domain (C1) between anthranilate's carbonyl carbon and kynurenine's aliphatic primary amine. The second C domain (C2) catalyzes the final cyclization event between the aromatic amine of kynurenine and the tethered carbonyl carbon, yielding nanangelenin B. The terminal T3 domain enhances the catalytic efficiency of C2, suggesting the T2-tethered Ant-L-Kyn is transferred to T3 prior to cyclization by C2. Once released from nanA, nanangelenin B is then prenylated by the prenyltransferase nanD to form nanangelenin C. Nanangelenin C is then N-hydroxylated by the FAD-dependent monooxygenase nanF and further acetylated by the acetyltransferase nanB to yield nanangelenin F. Finally, the N-methyltransferase nanE methylates the amide nitrogen of 1-benzazepine to convert nanangelenin F into nanangelenin A. NanE is also able to methylate most of the intermediates of the pathway such as nanangelenin B and nanangelenin C to produce nanangelenin D and nanangelenin E, respectively. The chain is Nonribosomal peptide synthetase nanA from Aspergillus nanangensis.